The sequence spans 200 residues: NAD(P)H dehydrogenase (quinone) (200 aa).

Residues 4–191 enclose the Flavodoxin-like domain; the sequence is VLVLYYSSYG…DIARYQGKHV (188 aa). FMN is bound by residues 10 to 15 and 79 to 81; these read SSYGHV and TRF. Tyr-12 contributes to the NAD(+) binding site. Trp-99 provides a ligand contact to substrate. Residues 114–120 and His-135 each bind FMN; that span reads STGTQHG.

It belongs to the WrbA family. It depends on FMN as a cofactor.

The catalysed reaction is a quinone + NADH + H(+) = a quinol + NAD(+). It catalyses the reaction a quinone + NADPH + H(+) = a quinol + NADP(+). This is NAD(P)H dehydrogenase (quinone) from Burkholderia cenocepacia (strain ATCC BAA-245 / DSM 16553 / LMG 16656 / NCTC 13227 / J2315 / CF5610) (Burkholderia cepacia (strain J2315)).